Reading from the N-terminus, the 360-residue chain is Peptide chain release factor 1 (360 aa).

The residue at position 235 (Gln-235) is an N5-methylglutamine. The disordered stretch occupies residues 285-305 (KRQEAEASERRNLLGSGDRSD).

Belongs to the prokaryotic/mitochondrial release factor family. Post-translationally, methylated by PrmC. Methylation increases the termination efficiency of RF1.

It localises to the cytoplasm. Functionally, peptide chain release factor 1 directs the termination of translation in response to the peptide chain termination codons UAG and UAA. The chain is Peptide chain release factor 1 from Proteus mirabilis (strain HI4320).